A 216-amino-acid chain; its full sequence is Regulator of G-protein signaling 19 (216 aa).

Basic and acidic residues predominate over residues 1–19 (MPTPHEAEKQHTGPEEADR). The interval 1 to 30 (MPTPHEAEKQHTGPEEADRPPSMSSHDAAP) is disordered. A phosphoserine mark is found at Ser-24 and Ser-97. Residues 90 to 206 (SFDKLMHSPT…LTSPTYRSLL (117 aa)) form the RGS domain. Position 151 is a phosphoserine; by MAPK1 and MAPK3 (Ser-151). Residues 207–216 (LQGAPQSSEA) are interaction with GIPC.

Interacts with GIPC PDZ domain. Interacts with GNAO1. Post-translationally, fatty acylated. Heavily palmitoylated in the cysteine string motif. In terms of processing, phosphorylated, mainly on serine residues.

Its subcellular location is the membrane. Its function is as follows. Inhibits signal transduction by increasing the GTPase activity of G protein alpha subunits thereby driving them into their inactive GDP-bound form. Binds to G-alpha subfamily 1 members, with the order G(i)a3 &gt; G(i)a1 &gt; G(o)a &gt;&gt; G(z)a/G(i)a2. Activity on G(z)-alpha is inhibited by phosphorylation and palmitoylation of the G-protein. This chain is Regulator of G-protein signaling 19 (Rgs19), found in Mus musculus (Mouse).